Here is a 295-residue protein sequence, read N- to C-terminus: Sulfotransferase 1A1 (295 aa).

48 to 53 (KSGTTW) contacts 3'-phosphoadenylyl sulfate. Substrate is bound at residue 106 to 108 (KTH). His-108 acts as the Proton acceptor in catalysis. 3'-phosphoadenylyl sulfate is bound by residues Arg-130, Ser-138, Tyr-193, 227–232 (TSFKEM), and 255–259 (FMRKG). Ser-138 bears the Phosphoserine mark.

Belongs to the sulfotransferase 1 family. In terms of assembly, homodimer.

The protein resides in the cytoplasm. The catalysed reaction is a phenol + 3'-phosphoadenylyl sulfate = an aryl sulfate + adenosine 3',5'-bisphosphate + H(+). It catalyses the reaction 17beta-estradiol + 3'-phosphoadenylyl sulfate = 17beta-estradiol 3-sulfate + adenosine 3',5'-bisphosphate + H(+). The enzyme catalyses 4-ethylphenol + 3'-phosphoadenylyl sulfate = 4-ethylphenyl sulfate + adenosine 3',5'-bisphosphate + H(+). It carries out the reaction 4-nitrophenol + 3'-phosphoadenylyl sulfate = 4-nitrophenyl sulfate + adenosine 3',5'-bisphosphate. The catalysed reaction is dopamine + 3'-phosphoadenylyl sulfate = dopamine 3-O-sulfate + adenosine 3',5'-bisphosphate + H(+). It catalyses the reaction dopamine + 3'-phosphoadenylyl sulfate = dopamine 4-O-sulfate + adenosine 3',5'-bisphosphate + H(+). The enzyme catalyses 3,3',5-triiodo-L-thyronine + 3'-phosphoadenylyl sulfate = 3,3',5-triiodo-L-thyronine sulfate + adenosine 3',5'-bisphosphate + H(+). It carries out the reaction 3,3',5'-triiodo-L-thyronine + 3'-phosphoadenylyl sulfate = 3,3',5'-triiodo-L-thyronine sulfate + adenosine 3',5'-bisphosphate + H(+). The catalysed reaction is 3,3'-diiodo-L-thyronine + 3'-phosphoadenylyl sulfate = 3,3'-diiodo-L-thyronine sulfate + adenosine 3',5'-bisphosphate + H(+). It catalyses the reaction L-thyroxine + 3'-phosphoadenylyl sulfate = L-thyroxine sulfate + adenosine 3',5'-bisphosphate + H(+). Its function is as follows. Sulfotransferase that utilizes 3'-phospho-5'-adenylyl sulfate (PAPS) as sulfonate donor to catalyze the sulfate conjugation of a wide variety of acceptor molecules bearing a hydroxyl or an amine group. Sulfonation increases the water solubility of most compounds, and therefore their renal excretion, but it can also result in bioactivation to form active metabolites. Displays broad substrate specificity for small phenolic compounds. Plays an important role in the sulfonation of endogenous molecules such as steroid hormones. Mediates also the metabolic activation of carcinogenic N-hydroxyarylamines leading to highly reactive intermediates capable of forming DNA adducts, potentially resulting in mutagenesis. May play a role in gut microbiota-host metabolic interaction. O-sulfonates 4-ethylphenol (4-EP), a dietary tyrosine-derived metabolite produced by gut bacteria. The product 4-EPS crosses the blood-brain barrier and may negatively regulate oligodendrocyte maturation and myelination, affecting the functional connectivity of different brain regions associated with the limbic system. Catalyzes the sulfate conjugation of dopamine. Catalyzes the sulfation of T4 (L-thyroxine/3,5,3',5'-tetraiodothyronine), T3 (3,5,3'-triiodothyronine), rT3 (3,3',5'-triiodothyronine) and 3,3'-T2 (3,3'-diiodothyronine), with a substrate preference of 3,3'-T2 &gt; rT3 &gt; T3 &gt; T4. This is Sulfotransferase 1A1 (SULT1A1) from Macaca fascicularis (Crab-eating macaque).